The chain runs to 211 residues: tRNA (guanine-N(7)-)-methyltransferase (211 aa).

The S-adenosyl-L-methionine site is built by E44, D69, D96, and D118. D118 is a catalytic residue. K122 is a substrate binding site. The segment at 124–129 is interaction with RNA; sequence RHEKRR. Residues D154 and 191-194 each bind substrate; that span reads TEYE.

This sequence belongs to the class I-like SAM-binding methyltransferase superfamily. TrmB family.

The enzyme catalyses guanosine(46) in tRNA + S-adenosyl-L-methionine = N(7)-methylguanosine(46) in tRNA + S-adenosyl-L-homocysteine. The protein operates within tRNA modification; N(7)-methylguanine-tRNA biosynthesis. Catalyzes the formation of N(7)-methylguanine at position 46 (m7G46) in tRNA. This is tRNA (guanine-N(7)-)-methyltransferase from Streptococcus pneumoniae (strain JJA).